The chain runs to 215 residues: Large ribosomal subunit protein uL4 (215 aa).

The disordered stretch occupies residues His43–Leu101. Basic and acidic residues predominate over residues Lys50–Gly59.

The protein belongs to the universal ribosomal protein uL4 family. Part of the 50S ribosomal subunit.

Its function is as follows. One of the primary rRNA binding proteins, this protein initially binds near the 5'-end of the 23S rRNA. It is important during the early stages of 50S assembly. It makes multiple contacts with different domains of the 23S rRNA in the assembled 50S subunit and ribosome. Forms part of the polypeptide exit tunnel. The protein is Large ribosomal subunit protein uL4 of Salinibacter ruber (strain DSM 13855 / M31).